An 81-amino-acid chain; its full sequence is Kappa-theraphotoxin-Gr2c (81 aa).

An N-terminal signal peptide occupies residues 1–19 (MKAFFVILGLALLCAYSFA). The propeptide occupies 20-50 (LEEQDQLSLRNDLLTVMFAENSELTPETEER). Cystine bridges form between C52–C66, C59–C71, and C65–C75.

Belongs to the neurotoxin 30 (phrixotoxin) family. In terms of tissue distribution, expressed by the venom gland.

It is found in the secreted. Inhibits sodium channels Nav1.1/SCN1A (IC(50)=5.7 uM), Nav1.2/SCN2A (IC(50)=12 uM), Nav1.4/SCN4A (IC(50)=4 uM), Nav1.6/SCN8A (IC(50)=6.6 uM), Nav1.7/SCN9A (IC(50)=13.6-1030 nM), potassium channels Kv11.1/KCNH2 (IC(50)=4.7 uM), as well as high-voltage-gated calcium channels Cav1.2/CACNA1C (IC(50)= nM). Also blocks mechanosensitive ion channels (also named stretch-activated channels or SACs) and the hypotonic cell swelling induced calcium increase associated with the activation of such channels. It can thus be useful in treating cardiac ventricular disturbances. Also induces analgesia in mammals. This is Kappa-theraphotoxin-Gr2c from Grammostola rosea (Chilean rose tarantula).